The primary structure comprises 674 residues: Enzymatic polyprotein (674 aa).

Residues 40-130 (IELHCFVDTG…CQLYEPFIQF (91 aa)) form a protease region. The active site involves D47. Residues 267–447 (LKVIKPSKSP…KKINFLGLEI (181 aa)) form the Reverse transcriptase domain.

Belongs to the caulimoviridae enzymatic polyprotein family.

The enzyme catalyses DNA(n) + a 2'-deoxyribonucleoside 5'-triphosphate = DNA(n+1) + diphosphate. Functionally, encodes for at least two polypeptides: protease (PR) and reverse transcriptase (RT). The protease processes the polyprotein in cis. Reverse transcriptase is multifunctional enzyme that converts the viral RNA genome into dsDNA in viral cytoplasmic capsids. This enzyme displays a DNA polymerase activity that can copy either DNA or RNA templates, and a ribonuclease H (RNase H) activity that cleaves the RNA strand of RNA-DNA heteroduplexes in a partially processive 3'- to 5'-endonucleasic mode. Neo-synthesized pregenomic RNA (pgRNA) are encapsidated, and reverse-transcribed inside the nucleocapsid. Partial (+)DNA is synthesized from the (-)DNA template and generates the relaxed circular DNA (RC-DNA) genome. After budding and infection, the RC-DNA migrates in the nucleus, and is converted into a plasmid-like covalently closed circular DNA (cccDNA). The chain is Enzymatic polyprotein from Arabidopsis thaliana (Mouse-ear cress).